Consider the following 52-residue polypeptide: ATP synthase protein 8 (52 aa).

The chain crosses the membrane as a helical span at residues 6–26; sequence PINGFVILCSISLMLLTLLIN.

It belongs to the ATPase protein 8 family. In terms of assembly, F-type ATPases have 2 components, CF(1) - the catalytic core - and CF(0) - the membrane proton channel.

It is found in the mitochondrion membrane. Its function is as follows. Mitochondrial membrane ATP synthase (F(1)F(0) ATP synthase or Complex V) produces ATP from ADP in the presence of a proton gradient across the membrane which is generated by electron transport complexes of the respiratory chain. F-type ATPases consist of two structural domains, F(1) - containing the extramembraneous catalytic core and F(0) - containing the membrane proton channel, linked together by a central stalk and a peripheral stalk. During catalysis, ATP synthesis in the catalytic domain of F(1) is coupled via a rotary mechanism of the central stalk subunits to proton translocation. Part of the complex F(0) domain. Minor subunit located with subunit a in the membrane. The sequence is that of ATP synthase protein 8 (MT-ATP8) from Albinaria turrita (Door snail).